A 410-amino-acid chain; its full sequence is Serine hydroxymethyltransferase (410 aa).

Residues L116 and 120–122 (GHL) each bind (6S)-5,6,7,8-tetrahydrofolate. The residue at position 225 (K225) is an N6-(pyridoxal phosphate)lysine. 349-351 (SPF) provides a ligand contact to (6S)-5,6,7,8-tetrahydrofolate.

It belongs to the SHMT family. As to quaternary structure, homodimer. The cofactor is pyridoxal 5'-phosphate.

The protein localises to the cytoplasm. It catalyses the reaction (6R)-5,10-methylene-5,6,7,8-tetrahydrofolate + glycine + H2O = (6S)-5,6,7,8-tetrahydrofolate + L-serine. It participates in one-carbon metabolism; tetrahydrofolate interconversion. The protein operates within amino-acid biosynthesis; glycine biosynthesis; glycine from L-serine: step 1/1. Its function is as follows. Catalyzes the reversible interconversion of serine and glycine with tetrahydrofolate (THF) serving as the one-carbon carrier. This reaction serves as the major source of one-carbon groups required for the biosynthesis of purines, thymidylate, methionine, and other important biomolecules. Also exhibits THF-independent aldolase activity toward beta-hydroxyamino acids, producing glycine and aldehydes, via a retro-aldol mechanism. This chain is Serine hydroxymethyltransferase, found in Leuconostoc citreum (strain KM20).